A 111-amino-acid chain; its full sequence is T cell receptor beta variable 29-1 (111 aa).

The first 16 residues, 1-16 (MLSLLLLLLGLGSVFS), serve as a signal peptide directing secretion. One can recognise an Ig-like domain in the interval 17 to 111 (AVISQKPSRD…DSSIYLCSVE (95 aa)). Cys-38 and Cys-108 are joined by a disulfide. N-linked (GlcNAc...) asparagine glycosylation is present at Asn-87.

In terms of assembly, alpha-beta TR is a heterodimer composed of an alpha and beta chain; disulfide-linked. The alpha-beta TR is associated with the transmembrane signaling CD3 coreceptor proteins to form the TR-CD3 (TcR or TCR). The assembly of alpha-beta TR heterodimers with CD3 occurs in the endoplasmic reticulum where a single alpha-beta TR heterodimer associates with one CD3D-CD3E heterodimer, one CD3G-CD3E heterodimer and one CD247 homodimer forming a stable octameric structure. CD3D-CD3E and CD3G-CD3E heterodimers preferentially associate with TR alpha and TR beta chains, respectively. The association of the CD247 homodimer is the last step of TcR assembly in the endoplasmic reticulum and is required for transport to the cell surface.

Its subcellular location is the cell membrane. In terms of biological role, v region of the variable domain of T cell receptor (TR) beta chain that participates in the antigen recognition. Alpha-beta T cell receptors are antigen specific receptors which are essential to the immune response and are present on the cell surface of T lymphocytes. Recognize peptide-major histocompatibility (MH) (pMH) complexes that are displayed by antigen presenting cells (APC), a prerequisite for efficient T cell adaptive immunity against pathogens. Binding of alpha-beta TR to pMH complex initiates TR-CD3 clustering on the cell surface and intracellular activation of LCK that phosphorylates the ITAM motifs of CD3G, CD3D, CD3E and CD247 enabling the recruitment of ZAP70. In turn ZAP70 phosphorylates LAT, which recruits numerous signaling molecules to form the LAT signalosome. The LAT signalosome propagates signal branching to three major signaling pathways, the calcium, the mitogen-activated protein kinase (MAPK) kinase and the nuclear factor NF-kappa-B (NF-kB) pathways, leading to the mobilization of transcription factors that are critical for gene expression and essential for T cell growth and differentiation. The T cell repertoire is generated in the thymus, by V-(D)-J rearrangement. This repertoire is then shaped by intrathymic selection events to generate a peripheral T cell pool of self-MH restricted, non-autoaggressive T cells. Post-thymic interaction of alpha-beta TR with the pMH complexes shapes TR structural and functional avidity. The chain is T cell receptor beta variable 29-1 from Homo sapiens (Human).